The following is a 67-amino-acid chain: ATP synthase F(0) complex subunit 8 (67 aa).

The helical transmembrane segment at 8 to 24 threads the bilayer; it reads TWFITITSMIMTLFILF. Lysine 54 bears the N6-acetyllysine; alternate mark. Position 54 is an N6-succinyllysine; alternate (lysine 54). Lysine 57 is subject to N6-acetyllysine.

It belongs to the ATPase protein 8 family. Component of the ATP synthase complex composed at least of ATP5F1A/subunit alpha, ATP5F1B/subunit beta, ATP5MC1/subunit c (homooctomer), MT-ATP6/subunit a, MT-ATP8/subunit 8, ATP5ME/subunit e, ATP5MF/subunit f, ATP5MG/subunit g, ATP5MK/subunit k, ATP5MJ/subunit j, ATP5F1C/subunit gamma, ATP5F1D/subunit delta, ATP5F1E/subunit epsilon, ATP5PF/subunit F6, ATP5PB/subunit b, ATP5PD/subunit d, ATP5PO/subunit OSCP. ATP synthase complex consists of a soluble F(1) head domain (subunits alpha(3) and beta(3)) - the catalytic core - and a membrane F(0) domain - the membrane proton channel (subunits c, a, 8, e, f, g, k and j). These two domains are linked by a central stalk (subunits gamma, delta, and epsilon) rotating inside the F1 region and a stationary peripheral stalk (subunits F6, b, d, and OSCP). Interacts with PRICKLE3.

Its subcellular location is the mitochondrion membrane. Functionally, subunit 8, of the mitochondrial membrane ATP synthase complex (F(1)F(0) ATP synthase or Complex V) that produces ATP from ADP in the presence of a proton gradient across the membrane which is generated by electron transport complexes of the respiratory chain. ATP synthase complex consist of a soluble F(1) head domain - the catalytic core - and a membrane F(1) domain - the membrane proton channel. These two domains are linked by a central stalk rotating inside the F(1) region and a stationary peripheral stalk. During catalysis, ATP synthesis in the catalytic domain of F(1) is coupled via a rotary mechanism of the central stalk subunits to proton translocation. In vivo, can only synthesize ATP although its ATP hydrolase activity can be activated artificially in vitro. Part of the complex F(0) domain. This is ATP synthase F(0) complex subunit 8 from Sus scrofa (Pig).